The sequence spans 715 residues: Fatty acid oxidation complex subunit alpha (715 aa).

The segment at 1–190 is enoyl-CoA hydratase/isomerase; sequence MIYEGKAITV…KVSAVDAVVT (190 aa). Residue Asp297 coordinates substrate. The segment at 312–715 is 3-hydroxyacyl-CoA dehydrogenase; the sequence is KDVKQAAVLG…MAKNGQSFFG (404 aa). Residues Met325, Asp344, 401–403, Lys408, and Ser430 contribute to the NAD(+) site; that span reads VVE. Catalysis depends on His451, which acts as the For 3-hydroxyacyl-CoA dehydrogenase activity. Residue Asn454 coordinates NAD(+). Substrate is bound by residues Asn501 and Tyr660.

It in the N-terminal section; belongs to the enoyl-CoA hydratase/isomerase family. In the C-terminal section; belongs to the 3-hydroxyacyl-CoA dehydrogenase family. As to quaternary structure, heterotetramer of two alpha chains (FadB) and two beta chains (FadA).

The enzyme catalyses a (3S)-3-hydroxyacyl-CoA + NAD(+) = a 3-oxoacyl-CoA + NADH + H(+). The catalysed reaction is a (3S)-3-hydroxyacyl-CoA = a (2E)-enoyl-CoA + H2O. It carries out the reaction a 4-saturated-(3S)-3-hydroxyacyl-CoA = a (3E)-enoyl-CoA + H2O. It catalyses the reaction (3S)-3-hydroxybutanoyl-CoA = (3R)-3-hydroxybutanoyl-CoA. The enzyme catalyses a (3Z)-enoyl-CoA = a 4-saturated (2E)-enoyl-CoA. The catalysed reaction is a (3E)-enoyl-CoA = a 4-saturated (2E)-enoyl-CoA. Its pathway is lipid metabolism; fatty acid beta-oxidation. Functionally, involved in the aerobic and anaerobic degradation of long-chain fatty acids via beta-oxidation cycle. Catalyzes the formation of 3-oxoacyl-CoA from enoyl-CoA via L-3-hydroxyacyl-CoA. It can also use D-3-hydroxyacyl-CoA and cis-3-enoyl-CoA as substrate. The chain is Fatty acid oxidation complex subunit alpha from Pseudomonas fragi.